Here is a 406-residue protein sequence, read N- to C-terminus: Mitochondrial ribosome-associated GTPase 2 (406 aa).

The segment at 15 to 406 is localized in the mitochondria; the sequence is FQGVGHWALS…LGQGRQPLRW (392 aa). The tract at residues 30–406 is not localized in the mitochondria; it reads KPSRLLPQRA…LGQGRQPLRW (377 aa). One can recognise an Obg domain in the interval 70–224; sequence RYFVDYRRVL…RVLHLELKTV (155 aa). Residues 225 to 390 form the OBG-type G domain; it reads AHAGMVGFPN…LLLHLKVLYD (166 aa). GTP is bound by residues 231–238, 256–260, 278–281, 345–348, and 371–373; these read GFPNAGKS, FTTLK, DIPG, NKID, and SAL. Residues S238 and T258 each contribute to the Mg(2+) site.

This sequence belongs to the TRAFAC class OBG-HflX-like GTPase superfamily. OBG GTPase family. Associates with the mitochondrial ribosome large subunit; the association occurs in a GTP-dependent manner. The cofactor is Mg(2+).

It is found in the mitochondrion. Its subcellular location is the mitochondrion inner membrane. Plays a role in the regulation of the mitochondrial ribosome assembly and of translational activity. Displays GTPase activity. Involved in the ribosome maturation process. The polypeptide is Mitochondrial ribosome-associated GTPase 2 (MTG2) (Homo sapiens (Human)).